The sequence spans 457 residues: Multidrug resistance protein MdtK (457 aa).

The next 12 membrane-spanning stretches (helical) occupy residues 11 to 31 (LLAL…MGFV), 53 to 73 (IWLP…PVIA), 93 to 113 (WLAS…GYII), 127 to 147 (AVGY…FQVA), 160 to 180 (GMVM…IFIY), 188 to 208 (LGGI…FIAM), 243 to 263 (LPIA…ALLV), 276 to 296 (IALN…AAVT), 314 to 334 (AART…IFTV), 357 to 377 (LMLL…GSGI), 387 to 407 (IFFI…YILA), and 418 to 438 (PAGF…LMML).

The protein belongs to the multi antimicrobial extrusion (MATE) (TC 2.A.66.1) family. MdtK subfamily.

Its subcellular location is the cell inner membrane. In terms of biological role, multidrug efflux pump that functions probably as a Na(+)/drug antiporter. The polypeptide is Multidrug resistance protein MdtK (Salmonella arizonae (strain ATCC BAA-731 / CDC346-86 / RSK2980)).